We begin with the raw amino-acid sequence, 466 residues long: ATP synthase subunit beta (466 aa).

Position 148–155 (148–155 (GGAGVGKT)) interacts with ATP.

Belongs to the ATPase alpha/beta chains family. As to quaternary structure, F-type ATPases have 2 components, CF(1) - the catalytic core - and CF(0) - the membrane proton channel. CF(1) has five subunits: alpha(3), beta(3), gamma(1), delta(1), epsilon(1). CF(0) has three main subunits: a(1), b(2) and c(9-12). The alpha and beta chains form an alternating ring which encloses part of the gamma chain. CF(1) is attached to CF(0) by a central stalk formed by the gamma and epsilon chains, while a peripheral stalk is formed by the delta and b chains.

It is found in the cell inner membrane. It catalyses the reaction ATP + H2O + 4 H(+)(in) = ADP + phosphate + 5 H(+)(out). In terms of biological role, produces ATP from ADP in the presence of a proton gradient across the membrane. The catalytic sites are hosted primarily by the beta subunits. In Xylella fastidiosa (strain M12), this protein is ATP synthase subunit beta.